A 1154-amino-acid chain; its full sequence is ATP-dependent helicase/deoxyribonuclease subunit B (1154 aa).

The 284-residue stretch at 1–284 folds into the UvrD-like helicase ATP-binding domain; the sequence is MSVRFIIGRS…EQLRHNVRHK (284 aa). 8 to 15 provides a ligand contact to ATP; the sequence is GRSGSGKT. The UvrD-like helicase C-terminal domain maps to 279 to 583; sequence HNVRHKHEEL…QFSLVPPATD (305 aa). Positions 799, 1120, 1123, and 1129 each coordinate [4Fe-4S] cluster.

It belongs to the helicase family. AddB/RexB type 1 subfamily. Heterodimer of AddA and AddB. It depends on Mg(2+) as a cofactor. [4Fe-4S] cluster is required as a cofactor.

In terms of biological role, the heterodimer acts as both an ATP-dependent DNA helicase and an ATP-dependent, dual-direction single-stranded exonuclease. Recognizes the chi site generating a DNA molecule suitable for the initiation of homologous recombination. The AddB subunit has 5' -&gt; 3' nuclease activity but not helicase activity. This chain is ATP-dependent helicase/deoxyribonuclease subunit B, found in Anoxybacillus flavithermus (strain DSM 21510 / WK1).